A 115-amino-acid polypeptide reads, in one-letter code: MQFVLSWVFLVAILKGVQCEVQLVESRGVLVQPGGSLRLSCAASGFTVSSNEMSWVRQAPGKGLEWVSSISGGSTYYADSRKGRFTISRDNSKNTLHLQMNSLRAEDTAVYYCKK.

An N-terminal signal peptide occupies residues 1–19; the sequence is MQFVLSWVFLVAILKGVQC. Residues 20 to 44 form a framework-1 region; that stretch reads EVQLVESRGVLVQPGGSLRLSCAAS. One can recognise an Ig-like domain in the interval 31 to 115; sequence VQPGGSLRLS…EDTAVYYCKK (85 aa). Residues Cys41 and Cys113 are joined by a disulfide bond. Residues 45 to 52 form a complementarity-determining-1 region; that stretch reads GFTVSSNE. The framework-2 stretch occupies residues 53-69; sequence MSWVRQAPGKGLEWVSS. Residues 70-75 are complementarity-determining-2; sequence ISGGST. The interval 76–113 is framework-3; the sequence is YYADSRKGRFTISRDNSKNTLHLQMNSLRAEDTAVYYC. A complementarity-determining-3 region spans residues 114-115; it reads KK.

Immunoglobulins are composed of two identical heavy chains and two identical light chains; disulfide-linked.

The protein localises to the secreted. Its subcellular location is the cell membrane. In terms of biological role, probable non-functional open reading frame (ORF) of V region of the variable domain of immunoglobulin heavy chains. Non-functional ORF generally cannot participate in the synthesis of a productive immunoglobulin chain due to altered V-(D)-J or switch recombination and/or splicing site (at mRNA level) and/or conserved amino acid change (protein level). Immunoglobulins, also known as antibodies, are membrane-bound or secreted glycoproteins produced by B lymphocytes. In the recognition phase of humoral immunity, the membrane-bound immunoglobulins serve as receptors which, upon binding of a specific antigen, trigger the clonal expansion and differentiation of B lymphocytes into immunoglobulins-secreting plasma cells. Secreted immunoglobulins mediate the effector phase of humoral immunity, which results in the elimination of bound antigens. The antigen binding site is formed by the variable domain of one heavy chain, together with that of its associated light chain. Thus, each immunoglobulin has two antigen binding sites with remarkable affinity for a particular antigen. The variable domains are assembled by a process called V-(D)-J rearrangement and can then be subjected to somatic hypermutations which, after exposure to antigen and selection, allow affinity maturation for a particular antigen. In Homo sapiens (Human), this protein is Probable non-functional immunoglobulin heavy variable 3-38-3.